A 64-amino-acid polypeptide reads, in one-letter code: Large ribosomal subunit protein bL32 (64 aa).

Residues 1 to 20 form a disordered region; it reads MALPKYKTSRANTHSRRANW.

The protein belongs to the bacterial ribosomal protein bL32 family.

The sequence is that of Large ribosomal subunit protein bL32 from Bifidobacterium adolescentis (strain ATCC 15703 / DSM 20083 / NCTC 11814 / E194a).